We begin with the raw amino-acid sequence, 115 residues long: Ribonuclease P protein component (115 aa).

It belongs to the RnpA family. In terms of assembly, consists of a catalytic RNA component (M1 or rnpB) and a protein subunit.

It catalyses the reaction Endonucleolytic cleavage of RNA, removing 5'-extranucleotides from tRNA precursor.. Its function is as follows. RNaseP catalyzes the removal of the 5'-leader sequence from pre-tRNA to produce the mature 5'-terminus. It can also cleave other RNA substrates such as 4.5S RNA. The protein component plays an auxiliary but essential role in vivo by binding to the 5'-leader sequence and broadening the substrate specificity of the ribozyme. The protein is Ribonuclease P protein component of Buchnera aphidicola subsp. Acyrthosiphon pisum (strain APS) (Acyrthosiphon pisum symbiotic bacterium).